Reading from the N-terminus, the 93-residue chain is Aspartyl/glutamyl-tRNA(Asn/Gln) amidotransferase subunit C (93 aa).

It belongs to the GatC family. Heterotrimer of A, B and C subunits.

It carries out the reaction L-glutamyl-tRNA(Gln) + L-glutamine + ATP + H2O = L-glutaminyl-tRNA(Gln) + L-glutamate + ADP + phosphate + H(+). The catalysed reaction is L-aspartyl-tRNA(Asn) + L-glutamine + ATP + H2O = L-asparaginyl-tRNA(Asn) + L-glutamate + ADP + phosphate + 2 H(+). Functionally, allows the formation of correctly charged Asn-tRNA(Asn) or Gln-tRNA(Gln) through the transamidation of misacylated Asp-tRNA(Asn) or Glu-tRNA(Gln) in organisms which lack either or both of asparaginyl-tRNA or glutaminyl-tRNA synthetases. The reaction takes place in the presence of glutamine and ATP through an activated phospho-Asp-tRNA(Asn) or phospho-Glu-tRNA(Gln). The polypeptide is Aspartyl/glutamyl-tRNA(Asn/Gln) amidotransferase subunit C (Methanocella arvoryzae (strain DSM 22066 / NBRC 105507 / MRE50)).